Reading from the N-terminus, the 313-residue chain is Ribosomal RNA small subunit methyltransferase H (313 aa).

S-adenosyl-L-methionine-binding positions include 35-37 (GGH), Asp55, Phe80, Asp102, and Gln109.

This sequence belongs to the methyltransferase superfamily. RsmH family.

It localises to the cytoplasm. The enzyme catalyses cytidine(1402) in 16S rRNA + S-adenosyl-L-methionine = N(4)-methylcytidine(1402) in 16S rRNA + S-adenosyl-L-homocysteine + H(+). Specifically methylates the N4 position of cytidine in position 1402 (C1402) of 16S rRNA. This Shewanella violacea (strain JCM 10179 / CIP 106290 / LMG 19151 / DSS12) protein is Ribosomal RNA small subunit methyltransferase H.